A 277-amino-acid chain; its full sequence is Elongation factor Ts (277 aa).

The tract at residues 79-82 (TDFV) is involved in Mg(2+) ion dislocation from EF-Tu.

It belongs to the EF-Ts family.

The protein localises to the cytoplasm. Functionally, associates with the EF-Tu.GDP complex and induces the exchange of GDP to GTP. It remains bound to the aminoacyl-tRNA.EF-Tu.GTP complex up to the GTP hydrolysis stage on the ribosome. In Phytoplasma australiense, this protein is Elongation factor Ts.